Here is an 82-residue protein sequence, read N- to C-terminus: Small ribosomal subunit protein bS16 (82 aa).

It belongs to the bacterial ribosomal protein bS16 family.

The protein is Small ribosomal subunit protein bS16 of Serratia proteamaculans (strain 568).